The sequence spans 98 residues: Hainantoxin-XVII.2 (98 aa).

The first 40 residues, 1–40, serve as a signal peptide directing secretion; it reads MTTVGVSLFRRSPEKITMKIAAFLGLSFLLIASYVLICEA. The propeptide occupies 41 to 64; that stretch reads QHPGFQELLILEENMRDPENSKER. 3 disulfide bridges follow: C66/C81, C73/C85, and C80/C95.

Belongs to the hainantoxin family. 17 subfamily. As to expression, expressed by the venom gland.

The protein resides in the secreted. Functionally, putative ion channel inhibitor. This is Hainantoxin-XVII.2 from Cyriopagopus hainanus (Chinese bird spider).